The sequence spans 480 residues: Zinc metalloproteinase/disintegrin (480 aa).

Positions 1–20 (MIQVLLITICLAVFPFQGSS) are cleaved as a signal peptide. The propeptide occupies 21–190 (IVLDSGNLNE…KASQLNVSPD (170 aa)). The Peptidase M12B domain occupies 197 to 391 (RFIKLAIYVD…HSPQCILNDP (195 aa)). Residues Asn259 and Asn279 are each glycosylated (N-linked (GlcNAc...) asparagine). 9 disulfide bridges follow: Cys308/Cys386, Cys348/Cys370, Cys350/Cys353, Cys413/Cys428, Cys415/Cys423, Cys422/Cys445, Cys436/Cys442, Cys441/Cys466, and Cys454/Cys473. His333 serves as a coordination point for Zn(2+). The active site involves Glu334. Residues His337 and His343 each coordinate Zn(2+). Residues 399 to 480 (TPVSGNELLE…AGCPRNPFHA (82 aa)) enclose the Disintegrin domain. Residues 458-460 (RGD) carry the Cell attachment site motif.

Belongs to the venom metalloproteinase (M12B) family. P-II subfamily. P-IIa sub-subfamily. Monomer. Zn(2+) serves as cofactor. Expressed by the venom gland.

The protein localises to the secreted. Functionally, impairs hemostasis in the envenomed animal. In terms of biological role, inhibits platelet aggregation and bone resorption. This is Zinc metalloproteinase/disintegrin from Gloydius halys (Chinese water mocassin).